A 219-amino-acid polypeptide reads, in one-letter code: 2-hydroxy-3-keto-5-methylthiopentenyl-1-phosphate phosphatase (219 aa).

This sequence belongs to the HAD-like hydrolase superfamily. MtnX family.

The enzyme catalyses 2-hydroxy-5-methylsulfanyl-3-oxopent-1-enyl phosphate + H2O = 1,2-dihydroxy-5-(methylsulfanyl)pent-1-en-3-one + phosphate. The protein operates within amino-acid biosynthesis; L-methionine biosynthesis via salvage pathway; L-methionine from S-methyl-5-thio-alpha-D-ribose 1-phosphate: step 4/6. In terms of biological role, dephosphorylates 2-hydroxy-3-keto-5-methylthiopentenyl-1-phosphate (HK-MTPenyl-1-P) yielding 1,2-dihydroxy-3-keto-5-methylthiopentene (DHK-MTPene). This Bacillus cereus (strain AH187) protein is 2-hydroxy-3-keto-5-methylthiopentenyl-1-phosphate phosphatase.